A 236-amino-acid chain; its full sequence is MREDDTHLPTGCGALDELLGGGVERGTVTQLYGPPAAGKTNVALTTAVTTAAAGGLAVYVDTEGLSLARFQQLLEARATDPEAASANVIVSDAHDFDEQAQAVRDTADFADRADLIVVDSVTGFYRLARGGDDTTGDALRQVADQITHLLSLARKHDLAVVVTNQVFTDVDNDSDRARPLGGHTLAHWTGTVLRLDRFRGGTRRATLEKHRAKPDGEHAQFQITDGGIDAASADDY.

The protein belongs to the eukaryotic RecA-like protein family. RadB subfamily.

In terms of biological role, involved in DNA repair and in homologous recombination. May regulate the cleavage reactions of the branch-structured DNA. Has a very weak ATPase activity that is not stimulated by DNA. Binds DNA but does not promote DNA strands exchange. In Halobacterium salinarum (strain ATCC 29341 / DSM 671 / R1), this protein is DNA repair and recombination protein RadB.